The following is a 317-amino-acid chain: Methionyl-tRNA formyltransferase (317 aa).

Residue 112 to 115 (SLLP) coordinates (6S)-5,6,7,8-tetrahydrofolate.

The protein belongs to the Fmt family.

The enzyme catalyses L-methionyl-tRNA(fMet) + (6R)-10-formyltetrahydrofolate = N-formyl-L-methionyl-tRNA(fMet) + (6S)-5,6,7,8-tetrahydrofolate + H(+). Functionally, attaches a formyl group to the free amino group of methionyl-tRNA(fMet). The formyl group appears to play a dual role in the initiator identity of N-formylmethionyl-tRNA by promoting its recognition by IF2 and preventing the misappropriation of this tRNA by the elongation apparatus. The chain is Methionyl-tRNA formyltransferase from Mycobacterium avium (strain 104).